The following is a 414-amino-acid chain: Procollagen C-endopeptidase enhancer 2 (414 aa).

The first 22 residues, Met-1–Pro-22, serve as a signal peptide directing secretion. Disulfide bonds link Cys-32–Cys-58, Cys-85–Cys-106, Cys-153–Cys-180, Cys-207–Cys-230, Cys-296–Cys-363, Cys-300–Cys-366, and Cys-311–Cys-414. CUB domains follow at residues Cys-32 to Ala-143 and Cys-153 to Arg-267. The 119-residue stretch at Cys-296–Cys-414 folds into the NTR domain. N-linked (GlcNAc...) asparagine glycosylation occurs at Asn-354.

In terms of assembly, interacts with heparin with high affinity, and type I or II collagen. Post-translationally, O-glycosylated; contains sialic acid.

Its subcellular location is the secreted. Binds to the C-terminal propeptide of types I and II procollagens and may enhance the cleavage of that propeptide by BMP1. The sequence is that of Procollagen C-endopeptidase enhancer 2 (Pcolce2) from Mus musculus (Mouse).